Here is a 201-residue protein sequence, read N- to C-terminus: Recombination protein RecR (201 aa).

A C4-type zinc finger spans residues 60–75 (CSTCGNVDTADPCMIC). The 96-residue stretch at 83-178 (GTIIVVEDVS…KVTRLAHGVP (96 aa)) folds into the Toprim domain.

It belongs to the RecR family.

May play a role in DNA repair. It seems to be involved in an RecBC-independent recombinational process of DNA repair. It may act with RecF and RecO. This is Recombination protein RecR from Mesorhizobium japonicum (strain LMG 29417 / CECT 9101 / MAFF 303099) (Mesorhizobium loti (strain MAFF 303099)).